Consider the following 1088-residue polypeptide: RNA-directed RNA polymerase (1088 aa).

The 187-residue stretch at 501–687 (LSYGDVTRFL…AKRYIAGGKI (187 aa)) folds into the RdRp catalytic domain.

The protein belongs to the reoviridae RNA-directed RNA polymerase family. In terms of assembly, interacts with VP3 (Potential). Interacts with VP2; this interaction activates VP1. Interacts with NSP5; this interaction is probably necessary for the formation of functional virus factories. Interacts with NSP2; this interaction is weak. The cofactor is Mg(2+).

It localises to the virion. The enzyme catalyses RNA(n) + a ribonucleoside 5'-triphosphate = RNA(n+1) + diphosphate. RNA-directed RNA polymerase that is involved in both transcription and genome replication. Together with VP3 capping enzyme, forms an enzyme complex positioned near the channels situated at each of the five-fold vertices of the core. Following infection, the outermost layer of the virus is lost, leaving a double-layered particle (DLP) made up of the core and VP6 shell. VP1 then catalyzes the transcription of fully conservative plus-strand genomic RNAs that are extruded through the DLP's channels into the cytoplasm where they function as mRNAs for translation of viral proteins. One copy of each of the viral (+)RNAs is also recruited during core assembly, together with newly synthesized polymerase complexes and VP2. The polymerase of these novo-formed particles catalyzes the synthesis of complementary minus-strands leading to dsRNA formation. To do so, the polymerase specifically recognizes and binds 4 bases 5'-UGUG-3' in the conserved 3'-sequence of plus-strand RNA templates. VP2 presumably activates the autoinhibited VP1-RNA complex to coordinate packaging and genome replication. Once dsRNA synthesis is complete, the polymerase switches to the transcriptional mode, thus providing secondary transcription. In Rotavirus A (strain RVA/SA11-Both/G3P5B[2]) (RV-A), this protein is RNA-directed RNA polymerase.